A 622-amino-acid chain; its full sequence is Polyamine transporter 3 (622 aa).

Polar residues predominate over residues 1 to 47 (MNRQESINSFNSDETSSLSDVESQQPQQYIPSESGSKSNMAPNQLKL). The disordered stretch occupies residues 1 to 76 (MNRQESINSF…VPDVNAPQSS (76 aa)). The Cytoplasmic portion of the chain corresponds to 1 to 182 (MNRQESINSF…WPAWIRWSYT (182 aa)). S55 carries the post-translational modification Phosphoserine. Phosphothreonine is present on T98. Residues S101 and S132 each carry the phosphoserine modification. The segment at 105–152 (TSTAISRTRTRQIDGASSPSSNEDALESDNNEKGKEGDSSGANDEAPD) is disordered. The chain crosses the membrane as a helical span at residues 183–203 (VLLSILVICVAYGSACISGGL). Residues 204-215 (GTVEKKYHVGME) lie on the Extracellular side of the membrane. Residues 216-236 (AAILSVSLMVIGFSLGPLIWS) form a helical membrane-spanning segment. At 237–245 (PVSDLYGRR) the chain is on the cytoplasmic side. Residues 246 to 266 (VAYFVSMGLYVIFNIPCALAP) traverse the membrane as a helical segment. Topologically, residues 267–275 (NLGSLLACR) are extracellular. Residues 276 to 296 (FLCGVWSSSGLCLVGGSIADM) form a helical membrane-spanning segment. Residues 297–305 (FPSETRGKA) lie on the Cytoplasmic side of the membrane. Residues 306–326 (IAFFAFAPYVGPVVGPLVNGF) form a helical membrane-spanning segment. Residues 327–335 (ISVSTGRMD) lie on the Extracellular side of the membrane. Residues 336–356 (LIFWVNMAFAGVMWIISSAIP) traverse the membrane as a helical segment. The Cytoplasmic portion of the chain corresponds to 357–416 (ETYAPVILKRKAARLRKETGNPKIMTEQEAQGVSMGEMMRACLLRPLYFSVTEPVLVATC). A helical transmembrane segment spans residues 417–437 (FYVCLIYSLLYAFFFAFPVIF). Residues 438–446 (GELYGYKDN) are Extracellular-facing. The chain crosses the membrane as a helical span at residues 447–467 (LVGLMFIPIVIGALWALATTF). The Cytoplasmic segment spans residues 468-487 (YCENKYLQIVKQRKPTPEDR). A helical transmembrane segment spans residues 488-508 (LLGAKIGAPFAAIALWILGAT). Residues 509–512 (AYKH) are Extracellular-facing. The helical transmembrane segment at 513–533 (IIWVGPASAGLAFGFGMVLIY) threads the bilayer. Topologically, residues 534-550 (YSLNNYIIDCYVQYASS) are cytoplasmic. Residues 551 to 571 (ALATKVFLRSAGGAAFPLFTI) form a helical membrane-spanning segment. At 572 to 583 (QMYHKLNLHWGS) the chain is on the extracellular side. The chain crosses the membrane as a helical span at residues 584–604 (WLLAFISTAMIALPFAFSYWG). Residues 605–622 (KGLRHKLSKKDYSIDSIE) lie on the Cytoplasmic side of the membrane.

Belongs to the major facilitator superfamily. DHA1 family. Polyamines/proton antiporter (TC 2.A.1.2.16) subfamily.

It is found in the cell membrane. Functionally, cell membrane polyamine/proton antiporter, involved in the detoxification of excess polyamines in the cytoplasm. Recognizes spermine, but not spermidine. This chain is Polyamine transporter 3 (TPO3), found in Saccharomyces cerevisiae (strain ATCC 204508 / S288c) (Baker's yeast).